We begin with the raw amino-acid sequence, 226 residues long: ATP synthase F(0) complex subunit a (226 aa).

A run of 6 helical transmembrane segments spans residues 6–26 (FASF…IILF), 68–88 (WSLM…LGLL), 97–117 (QLSM…VMGF), 138–158 (IPML…ALAV), 164–184 (ITAG…LSTI), and 189–209 (TLII…VALI).

Belongs to the ATPase A chain family. Component of the ATP synthase complex composed at least of ATP5F1A/subunit alpha, ATP5F1B/subunit beta, ATP5MC1/subunit c (homooctomer), MT-ATP6/subunit a, MT-ATP8/subunit 8, ATP5ME/subunit e, ATP5MF/subunit f, ATP5MG/subunit g, ATP5MK/subunit k, ATP5MJ/subunit j, ATP5F1C/subunit gamma, ATP5F1D/subunit delta, ATP5F1E/subunit epsilon, ATP5PF/subunit F6, ATP5PB/subunit b, ATP5PD/subunit d, ATP5PO/subunit OSCP. ATP synthase complex consists of a soluble F(1) head domain (subunits alpha(3) and beta(3)) - the catalytic core - and a membrane F(0) domain - the membrane proton channel (subunits c, a, 8, e, f, g, k and j). These two domains are linked by a central stalk (subunits gamma, delta, and epsilon) rotating inside the F1 region and a stationary peripheral stalk (subunits F6, b, d, and OSCP). Interacts with DNAJC30; interaction is direct.

Its subcellular location is the mitochondrion inner membrane. It carries out the reaction H(+)(in) = H(+)(out). Subunit a, of the mitochondrial membrane ATP synthase complex (F(1)F(0) ATP synthase or Complex V) that produces ATP from ADP in the presence of a proton gradient across the membrane which is generated by electron transport complexes of the respiratory chain. ATP synthase complex consist of a soluble F(1) head domain - the catalytic core - and a membrane F(1) domain - the membrane proton channel. These two domains are linked by a central stalk rotating inside the F(1) region and a stationary peripheral stalk. During catalysis, ATP synthesis in the catalytic domain of F(1) is coupled via a rotary mechanism of the central stalk subunits to proton translocation. With the subunit c (ATP5MC1), forms the proton-conducting channel in the F(0) domain, that contains two crucial half-channels (inlet and outlet) that facilitate proton movement from the mitochondrial intermembrane space (IMS) into the matrix. Protons are taken up via the inlet half-channel and released through the outlet half-channel, following a Grotthuss mechanism. The sequence is that of ATP synthase F(0) complex subunit a from Pan paniscus (Pygmy chimpanzee).